Consider the following 87-residue polypeptide: Mu-conotoxin cal12b (87 aa).

Positions 1–19 are cleaved as a signal peptide; it reads MKLTCVLVVLLLLLPYGDL. A propeptide spanning residues 20 to 42 is cleaved from the precursor; that stretch reads ITNNYIRGAARKVTPWRRNLKTR. 4 disulfides stabilise this stretch: cysteine 45-cysteine 58, cysteine 53-cysteine 70, cysteine 60-cysteine 75, and cysteine 69-cysteine 81. 6'-bromotryptophan is present on tryptophan 59. A 4-hydroxyproline modification is found at proline 65. 6'-bromotryptophan occurs at positions 79 and 80. Proline 82 carries the 4-hydroxyproline modification. Tryptophan 86 is modified (6'-bromotryptophan).

Expressed by the venom duct.

It is found in the secreted. Its function is as follows. Mu-conotoxins block voltage-gated sodium channels. This toxin reversibly blocks voltage-gated sodium channel in cephalopods (tested on squid giant-fiber-lobe neurons) with an inhibitor constant (Ki) of 15 nmol/l, with no alteration in the voltage dependence of sodium conductance or on the kinetics of inactivation. Has no effect on sodium channels of the two gastropod S.luhuanus and A.californica (which are not natural prey). This is Mu-conotoxin cal12b from Californiconus californicus (California cone).